Here is a 100-residue protein sequence, read N- to C-terminus: Virion membrane protein OPG135 (100 aa).

A signal peptide spans 1–22 (MSCYTAILKSVGGLALFQVANG). The Intravirion portion of the chain corresponds to 23 to 45 (AIDLCRHFFMYFCEQKLRPNSFW). A helical transmembrane segment spans residues 46–66 (FVVVRAIASMIMYLVLGIALL). The Virion surface segment spans residues 67–83 (YISEQDDKKNTNNDSNS). The interval 75 to 100 (KNTNNDSNSNNDKRNVSSINSNSSHK) is disordered. N-linked (GlcNAc...) asparagine; by host glycans are attached at residues asparagine 79, asparagine 89, and asparagine 96.

This sequence belongs to the chordopoxvirinae A9 family.

It localises to the virion membrane. Its subcellular location is the host cytoplasm. In terms of biological role, envelope protein. Required for an early step in virion morphogenesis. In Monkeypox virus, this protein is Virion membrane protein OPG135 (OPG135).